A 291-amino-acid polypeptide reads, in one-letter code: Trimeric intracellular cation channel type B (291 aa).

Over 1–19 (MDSPWDELALAFSRTSMFP) the chain is Lumenal. A helical transmembrane segment spans residues 20-33 (FFDIAHYLVSVMAV). Residues 34–50 (KRQPGAAALAWKNPISS) lie on the Cytoplasmic side of the membrane. A helical membrane pass occupies residues 51 to 70 (WFTAMLHCFGGGILSCLLLA). Over 71 to 82 (EPPLKFLANHTN) the chain is Lumenal. A helical transmembrane segment spans residues 83–99 (ILLASSIWYITFFCPHD). The Cytoplasmic segment spans residues 100-104 (LVSQG). The chain crosses the membrane as a helical span at residues 105 to 121 (YSYLPVQLLASGMKEVT). Residues lysine 118 and arginine 122 each contribute to the a 1,2-diacyl-sn-glycero-3-phospho-(1D-myo-inositol-4,5-bisphosphate) site. Over 122 to 139 (RTWKIVGGVTHANSYYKN) the chain is Lumenal. A helical transmembrane segment spans residues 140-156 (GWIVMIAIGWARGAGGT). Residues 157–179 (IITNFERLVKGDWKPEGDEWLKM) lie on the Cytoplasmic side of the membrane. The helical transmembrane segment at 180–195 (SYPAKVTLLGSVIFTF) threads the bilayer. Over 196 to 207 (QHTQHLAISKHN) the chain is Lumenal. Residues 208–227 (LMFLYTIFIVATKITMMTTQ) form a helical membrane-spanning segment. Residues 228-291 (TSTMTFAPFE…VKKKHTKKNE (64 aa)) lie on the Cytoplasmic side of the membrane. The interval 256–291 (KKSEAKSPSNGVGSLASKPVDVASDNVKKKHTKKNE) is disordered. Position 262 is a phosphoserine (serine 262).

This sequence belongs to the TMEM38 family. Homotrimer; conformation seems to be controled by binding to diacylglycerol (DAG).

The protein localises to the endoplasmic reticulum membrane. It carries out the reaction K(+)(in) = K(+)(out). Its activity is regulated as follows. Channel activity is activated by increased cytosolic Ca(2+) levels and blocked by luminal high Ca(2+) levels. Its function is as follows. Intracellular monovalent cation channel required for maintenance of rapid intracellular calcium release. Acts as a potassium counter-ion channel that functions in synchronization with calcium release from intracellular stores. Activated by increased cytosolic Ca(2+) levels. This Homo sapiens (Human) protein is Trimeric intracellular cation channel type B.